An 84-amino-acid polypeptide reads, in one-letter code: uncharacterized protein (84 aa).

This is an uncharacterized protein from Orgyia pseudotsugata multicapsid polyhedrosis virus (OpMNPV).